Consider the following 317-residue polypeptide: MAELACFCYPHLENDSYRFIPFNSLAIKCMLTAKVDKKDQDKFYNSIIYGIAPPPQFKKRYNTSDNSRGMNYETSMFNKVAALICEALNSIKVTQSDVASVLSKIVSVRHLENLVLRRENHQDVLFHSKELLLKSVLIAIGHSKEIETTATAEGGEIVFQNAAFTMWKLTYLEHKLMPILDQNFIEYKITLNEDKPISESHVKELIAELRWQYNKFAVITHGKGHYRVVKYSSVANHADRVYATFKSNNKNGNMIEFNLLDQRIIWQNWYAFTSSMKQGNTLEICKKLLFQKMKRESNPFKGLSTDRKMDEVSQIGI.

ATP is bound by residues 107–109 (SVR), lysine 188, and 221–223 (HGK). The RNA-binding stretch occupies residues 205–241 (LIAELRWQYNKFAVITHGKGHYRVVKYSSVANHADRV). Catalysis depends on histidine 225, which acts as the For NTPase and RTPase activities. Arginine 227 lines the ATP pocket.

This sequence belongs to the rotavirus NSP2 family. As to quaternary structure, homooctamer. Interacts with VP1; this interaction is weak. Interacts with NSP5; this interaction leads to up-regulation of NSP5 phosphorylation and formation of viral factories. Interacts with host DCP1A, DCP1B, DDX6, EDC4 and EIF2S1/eIF2-alpha; these interactions are probably part of the sequestration of some host SGs and PBs proteins in viral factories. The cofactor is Mg(2+).

It localises to the host cytoplasm. Functionally, participates in replication and packaging of the viral genome. Plays a crucial role, together with NSP5, in the formation of virus factories (viroplasms) which are large inclusions in the host cytoplasm where replication intermediates are assembled and viral RNA replication takes place. Displays ssRNA binding, NTPase, RNA triphosphatase (RTPase) and ATP-independent helix-unwinding activities. The unwinding activity may prepare and organize plus-strand RNAs for packaging and replication by removing interfering secondary structures. The RTPase activity plays a role in the removal of the gamma-phosphate from the rotavirus RNA minus strands of dsRNA genome segments. Participates in the selective exclusion of host proteins from stress granules (SG) and P bodies (PB). Also participates in the sequestration of these remodeled organelles in viral factories. This is Non-structural protein 2 from Macaca mulatta (Rhesus macaque).